Consider the following 868-residue polypeptide: Leucine--tRNA ligase (868 aa).

The 'HIGH' region signature appears at 42–52; that stretch reads PYPSGKLHMGH. A 'KMSKS' region motif is present at residues 627–631; that stretch reads KMSKS. Lysine 630 is an ATP binding site.

This sequence belongs to the class-I aminoacyl-tRNA synthetase family.

The protein resides in the cytoplasm. The enzyme catalyses tRNA(Leu) + L-leucine + ATP = L-leucyl-tRNA(Leu) + AMP + diphosphate. The polypeptide is Leucine--tRNA ligase (Pseudomonas putida (strain GB-1)).